The following is a 197-amino-acid chain: Holliday junction branch migration complex subunit RuvA (197 aa).

The tract at residues M1–L64 is domain I. The interval T65–I144 is domain II. Residues I145–T149 are flexible linker. A domain III region spans residues T149 to K197.

It belongs to the RuvA family. As to quaternary structure, homotetramer. Forms an RuvA(8)-RuvB(12)-Holliday junction (HJ) complex. HJ DNA is sandwiched between 2 RuvA tetramers; dsDNA enters through RuvA and exits via RuvB. An RuvB hexamer assembles on each DNA strand where it exits the tetramer. Each RuvB hexamer is contacted by two RuvA subunits (via domain III) on 2 adjacent RuvB subunits; this complex drives branch migration. In the full resolvosome a probable DNA-RuvA(4)-RuvB(12)-RuvC(2) complex forms which resolves the HJ.

The protein resides in the cytoplasm. Functionally, the RuvA-RuvB-RuvC complex processes Holliday junction (HJ) DNA during genetic recombination and DNA repair, while the RuvA-RuvB complex plays an important role in the rescue of blocked DNA replication forks via replication fork reversal (RFR). RuvA specifically binds to HJ cruciform DNA, conferring on it an open structure. The RuvB hexamer acts as an ATP-dependent pump, pulling dsDNA into and through the RuvAB complex. HJ branch migration allows RuvC to scan DNA until it finds its consensus sequence, where it cleaves and resolves the cruciform DNA. This Clostridium botulinum (strain Kyoto / Type A2) protein is Holliday junction branch migration complex subunit RuvA.